A 413-amino-acid chain; its full sequence is Serine hydroxymethyltransferase (413 aa).

Residues Leu117 and 121–123 contribute to the (6S)-5,6,7,8-tetrahydrofolate site; that span reads GHL. Lys226 is modified (N6-(pyridoxal phosphate)lysine). 349–351 lines the (6S)-5,6,7,8-tetrahydrofolate pocket; sequence SPF.

Belongs to the SHMT family. In terms of assembly, homodimer. Requires pyridoxal 5'-phosphate as cofactor.

It is found in the cytoplasm. The enzyme catalyses (6R)-5,10-methylene-5,6,7,8-tetrahydrofolate + glycine + H2O = (6S)-5,6,7,8-tetrahydrofolate + L-serine. It functions in the pathway one-carbon metabolism; tetrahydrofolate interconversion. The protein operates within amino-acid biosynthesis; glycine biosynthesis; glycine from L-serine: step 1/1. Functionally, catalyzes the reversible interconversion of serine and glycine with tetrahydrofolate (THF) serving as the one-carbon carrier. This reaction serves as the major source of one-carbon groups required for the biosynthesis of purines, thymidylate, methionine, and other important biomolecules. Also exhibits THF-independent aldolase activity toward beta-hydroxyamino acids, producing glycine and aldehydes, via a retro-aldol mechanism. This Pelobacter propionicus (strain DSM 2379 / NBRC 103807 / OttBd1) protein is Serine hydroxymethyltransferase.